A 333-amino-acid chain; its full sequence is Phenylalanine--tRNA ligase alpha subunit (333 aa).

Glu254 is a binding site for Mg(2+).

It belongs to the class-II aminoacyl-tRNA synthetase family. Phe-tRNA synthetase alpha subunit type 1 subfamily. In terms of assembly, tetramer of two alpha and two beta subunits. Mg(2+) serves as cofactor.

It localises to the cytoplasm. The catalysed reaction is tRNA(Phe) + L-phenylalanine + ATP = L-phenylalanyl-tRNA(Phe) + AMP + diphosphate + H(+). The polypeptide is Phenylalanine--tRNA ligase alpha subunit (Xylella fastidiosa (strain M12)).